Here is a 354-residue protein sequence, read N- to C-terminus: Anthranilate phosphoribosyltransferase (354 aa).

The protein belongs to the anthranilate phosphoribosyltransferase family.

The enzyme catalyses N-(5-phospho-beta-D-ribosyl)anthranilate + diphosphate = 5-phospho-alpha-D-ribose 1-diphosphate + anthranilate. It functions in the pathway amino-acid biosynthesis; L-tryptophan biosynthesis; L-tryptophan from chorismate: step 2/5. The polypeptide is Anthranilate phosphoribosyltransferase (trp4) (Schizosaccharomyces pombe (strain 972 / ATCC 24843) (Fission yeast)).